Here is a 301-residue protein sequence, read N- to C-terminus: Homoserine O-acetyltransferase (301 aa).

The active-site Acyl-thioester intermediate is cysteine 142. Substrate-binding residues include lysine 163 and serine 192. The active-site Proton acceptor is histidine 235. Glutamate 237 is an active-site residue. Arginine 249 is a binding site for substrate.

It belongs to the MetA family.

The protein resides in the cytoplasm. It catalyses the reaction L-homoserine + acetyl-CoA = O-acetyl-L-homoserine + CoA. Its pathway is amino-acid biosynthesis; L-methionine biosynthesis via de novo pathway; O-acetyl-L-homoserine from L-homoserine: step 1/1. In terms of biological role, transfers an acetyl group from acetyl-CoA to L-homoserine, forming acetyl-L-homoserine. In Bacillus cytotoxicus (strain DSM 22905 / CIP 110041 / 391-98 / NVH 391-98), this protein is Homoserine O-acetyltransferase.